A 526-amino-acid polypeptide reads, in one-letter code: Bifunctional purine biosynthesis protein PurH (526 aa).

In terms of domain architecture, MGS-like spans 1-149 (MLHSLPIRRA…KNHEAVTVVV (149 aa)).

The protein belongs to the PurH family.

It catalyses the reaction (6R)-10-formyltetrahydrofolate + 5-amino-1-(5-phospho-beta-D-ribosyl)imidazole-4-carboxamide = 5-formamido-1-(5-phospho-D-ribosyl)imidazole-4-carboxamide + (6S)-5,6,7,8-tetrahydrofolate. It carries out the reaction IMP + H2O = 5-formamido-1-(5-phospho-D-ribosyl)imidazole-4-carboxamide. It participates in purine metabolism; IMP biosynthesis via de novo pathway; 5-formamido-1-(5-phospho-D-ribosyl)imidazole-4-carboxamide from 5-amino-1-(5-phospho-D-ribosyl)imidazole-4-carboxamide (10-formyl THF route): step 1/1. It functions in the pathway purine metabolism; IMP biosynthesis via de novo pathway; IMP from 5-formamido-1-(5-phospho-D-ribosyl)imidazole-4-carboxamide: step 1/1. This Rhodospirillum rubrum (strain ATCC 11170 / ATH 1.1.1 / DSM 467 / LMG 4362 / NCIMB 8255 / S1) protein is Bifunctional purine biosynthesis protein PurH.